Here is a 312-residue protein sequence, read N- to C-terminus: Isethionate sulfite-lyase activating enzyme (312 aa).

A Radical SAM core domain is found at 20 to 304; it reads HDGPGIRTIV…GLQKTALDIL (285 aa). [4Fe-4S] cluster-binding residues include Cys34, Cys38, Cys41, Cys60, Cys66, Cys69, Cys73, Cys93, Cys96, Cys100, and Cys104. Residue 40-42 participates in S-adenosyl-L-methionine binding; it reads WCS. 4Fe-4S ferredoxin-type domains lie at 51–83 and 84–115; these read AELACNPGRCIDISKCGHCLTACPHGAITCGDD and DKPRIDRSHCADCSIPCAEVCPAQGLLVYGKK. S-adenosyl-L-methionine contacts are provided by residues Gly144, 193-195, and His267; that span reads DIK.

The protein belongs to the organic radical-activating enzymes family. Monomer. Requires [4Fe-4S] cluster as cofactor.

The catalysed reaction is glycyl-[protein] + reduced [flavodoxin] + S-adenosyl-L-methionine = glycin-2-yl radical-[protein] + semiquinone [flavodoxin] + 5'-deoxyadenosine + L-methionine + H(+). Its pathway is organosulfur degradation; alkanesulfonate degradation. Its function is as follows. Involved in an anaerobic respiration pathway that converts the sulfonate isethionate (2-hydroxyethanesulfonate) to ammonia, acetate and sulfide. Catalyzes activation of the isethionate sulfite-lyase IslA under anaerobic conditions by generation of an organic free radical on a glycine residue, via a homolytic cleavage of S-adenosyl-L-methionine (SAM). In Desulfovibrio desulfuricans (strain ATCC 27774 / DSM 6949 / MB), this protein is Isethionate sulfite-lyase activating enzyme.